A 295-amino-acid polypeptide reads, in one-letter code: UDP-N-acetylenolpyruvoylglucosamine reductase (295 aa).

The FAD-binding PCMH-type domain occupies 24-188 (KVGGDAEIFF…LKAVFKVNKG (165 aa)). The active site involves Arg-168. The Proton donor role is filled by Ser-217. Glu-287 is a catalytic residue.

Belongs to the MurB family. Requires FAD as cofactor.

It localises to the cytoplasm. It carries out the reaction UDP-N-acetyl-alpha-D-muramate + NADP(+) = UDP-N-acetyl-3-O-(1-carboxyvinyl)-alpha-D-glucosamine + NADPH + H(+). The protein operates within cell wall biogenesis; peptidoglycan biosynthesis. Its function is as follows. Cell wall formation. The sequence is that of UDP-N-acetylenolpyruvoylglucosamine reductase from Rickettsia akari (strain Hartford).